The chain runs to 359 residues: 3-dehydroquinate synthase (359 aa).

NAD(+)-binding positions include 72–77 (EGEEHK), 106–110 (GVVGD), 130–131 (TT), Lys143, Lys152, and 170–173 (TLTT). Residues Glu185, His248, and His265 each contribute to the Zn(2+) site.

The protein belongs to the sugar phosphate cyclases superfamily. Dehydroquinate synthase family. Co(2+) is required as a cofactor. It depends on Zn(2+) as a cofactor. Requires NAD(+) as cofactor.

It is found in the cytoplasm. The catalysed reaction is 7-phospho-2-dehydro-3-deoxy-D-arabino-heptonate = 3-dehydroquinate + phosphate. It functions in the pathway metabolic intermediate biosynthesis; chorismate biosynthesis; chorismate from D-erythrose 4-phosphate and phosphoenolpyruvate: step 2/7. Functionally, catalyzes the conversion of 3-deoxy-D-arabino-heptulosonate 7-phosphate (DAHP) to dehydroquinate (DHQ). The protein is 3-dehydroquinate synthase of Pelobacter propionicus (strain DSM 2379 / NBRC 103807 / OttBd1).